Here is a 672-residue protein sequence, read N- to C-terminus: tRNA 5-methylaminomethyl-2-thiouridine biosynthesis bifunctional protein MnmC (672 aa).

The interval 1–241 is tRNA (mnm(5)s(2)U34)-methyltransferase; the sequence is MHKVQFADVH…KRECLQGVKA (241 aa). The interval 269-672 is FAD-dependent cmnm(5)s(2)U34 oxidoreductase; sequence IGGGIASVFS…LLKGSQVKQG (404 aa).

This sequence in the N-terminal section; belongs to the methyltransferase superfamily. tRNA (mnm(5)s(2)U34)-methyltransferase family. In the C-terminal section; belongs to the DAO family. FAD is required as a cofactor.

Its subcellular location is the cytoplasm. It carries out the reaction 5-aminomethyl-2-thiouridine(34) in tRNA + S-adenosyl-L-methionine = 5-methylaminomethyl-2-thiouridine(34) in tRNA + S-adenosyl-L-homocysteine + H(+). Its function is as follows. Catalyzes the last two steps in the biosynthesis of 5-methylaminomethyl-2-thiouridine (mnm(5)s(2)U) at the wobble position (U34) in tRNA. Catalyzes the FAD-dependent demodification of cmnm(5)s(2)U34 to nm(5)s(2)U34, followed by the transfer of a methyl group from S-adenosyl-L-methionine to nm(5)s(2)U34, to form mnm(5)s(2)U34. The protein is tRNA 5-methylaminomethyl-2-thiouridine biosynthesis bifunctional protein MnmC of Pasteurella multocida (strain Pm70).